A 599-amino-acid chain; its full sequence is MSKLNHIRNFSIIAHIDHGKSTLADRFIQYCGGLSDREMSEQVLDSMDIERERGITIKAQSVTLYYDAKDGSRYQLNFIDTPGHVDFSYEVSRSLAACEGALLVVDAAQGVEAQSVANCYTAIEMGLEVIPILNKMDLPQAEPARVRHEIEEIIGIDAAGAVEASAKAGMGIQESLEQIVQLVPPPEGDPDAPLQALIIDSWFDNYLGVVSLVRVKNGTLNKGDKILIKSTKTQELVTSIGVFTPKRTETGCLKAGEVGYVIAGIKDIHGAPVGDTITLAKTPDVASLPGFKRVQPQVYAGVFPVSSDDYEDFRDALDKLTLNDASLFFEPETSDALGFGFRCGFLGMLHMEIIQERLEREYDLDLITTAPTVVYEVLTKKNEVIKVDNPSRLPDPGFIEEMREPIVEANILVPQAYLGNVISLCVEKRGVQKNMQFLGNQVALSYELPMGEVVLDFFDRLKSVSRGYASLDYHFVRFQAANLVRLDILINGDKVDALALIVHRDNAASRGRLLTEKMKELIPRQMFDVAIQAAIGGQIVSRTTVKALRKNVLAKCYGGDVSRKKKLLQKQKEGKKRMKQVGSVEIPQDAFLAVLKVDK.

A tr-type G domain is found at 5–187 (NHIRNFSIIA…QIVQLVPPPE (183 aa)). GTP contacts are provided by residues 17-22 (DHGKST) and 134-137 (NKMD).

It belongs to the TRAFAC class translation factor GTPase superfamily. Classic translation factor GTPase family. LepA subfamily.

The protein localises to the cell inner membrane. The enzyme catalyses GTP + H2O = GDP + phosphate + H(+). In terms of biological role, required for accurate and efficient protein synthesis under certain stress conditions. May act as a fidelity factor of the translation reaction, by catalyzing a one-codon backward translocation of tRNAs on improperly translocated ribosomes. Back-translocation proceeds from a post-translocation (POST) complex to a pre-translocation (PRE) complex, thus giving elongation factor G a second chance to translocate the tRNAs correctly. Binds to ribosomes in a GTP-dependent manner. The sequence is that of Elongation factor 4 from Hahella chejuensis (strain KCTC 2396).